The following is a 984-amino-acid chain: Probable beta-galactosidase C (984 aa).

A signal peptide spans 1–23 (MRLLSFIYLVWLALLTGTPQVSA). Tyrosine 82, asparagine 127, alanine 128, glutamate 129, and asparagine 187 together coordinate substrate. Catalysis depends on glutamate 188, which acts as the Proton donor. N-linked (GlcNAc...) asparagine glycosylation is present at asparagine 197. Residue tyrosine 251 participates in substrate binding. An intrachain disulfide couples cysteine 257 to cysteine 304. N-linked (GlcNAc...) asparagine glycosylation occurs at asparagine 276. Glutamate 287 acts as the Nucleophile in catalysis. Tyrosine 353 contributes to the substrate binding site. Asparagine 391, asparagine 421, asparagine 434, asparagine 517, asparagine 602, asparagine 677, asparagine 715, asparagine 720, asparagine 759, and asparagine 805 each carry an N-linked (GlcNAc...) asparagine glycan.

Belongs to the glycosyl hydrolase 35 family.

It localises to the secreted. It catalyses the reaction Hydrolysis of terminal non-reducing beta-D-galactose residues in beta-D-galactosides.. In terms of biological role, cleaves beta-linked terminal galactosyl residues from gangliosides, glycoproteins, and glycosaminoglycans. The sequence is that of Probable beta-galactosidase C (lacC) from Aspergillus flavus (strain ATCC 200026 / FGSC A1120 / IAM 13836 / NRRL 3357 / JCM 12722 / SRRC 167).